A 198-amino-acid polypeptide reads, in one-letter code: Holliday junction branch migration complex subunit RuvA (198 aa).

The domain I stretch occupies residues 1 to 63 (MYDYIKGQLT…EDAHLLFGFH (63 aa)). The tract at residues 64–142 (TKDEKDVFLK…EAPQETGNTK (79 aa)) is domain II. A flexible linker region spans residues 143–147 (ARSNK). Positions 148–198 (AGNTQLDEAIEALLALGYKATELKKIRAFFEGTSETAEQYIKSALKLLMKG) are domain III.

This sequence belongs to the RuvA family. As to quaternary structure, homotetramer. Forms an RuvA(8)-RuvB(12)-Holliday junction (HJ) complex. HJ DNA is sandwiched between 2 RuvA tetramers; dsDNA enters through RuvA and exits via RuvB. An RuvB hexamer assembles on each DNA strand where it exits the tetramer. Each RuvB hexamer is contacted by two RuvA subunits (via domain III) on 2 adjacent RuvB subunits; this complex drives branch migration. In the full resolvosome a probable DNA-RuvA(4)-RuvB(12)-RuvC(2) complex forms which resolves the HJ.

Its subcellular location is the cytoplasm. In terms of biological role, the RuvA-RuvB-RuvC complex processes Holliday junction (HJ) DNA during genetic recombination and DNA repair, while the RuvA-RuvB complex plays an important role in the rescue of blocked DNA replication forks via replication fork reversal (RFR). RuvA specifically binds to HJ cruciform DNA, conferring on it an open structure. The RuvB hexamer acts as an ATP-dependent pump, pulling dsDNA into and through the RuvAB complex. HJ branch migration allows RuvC to scan DNA until it finds its consensus sequence, where it cleaves and resolves the cruciform DNA. This is Holliday junction branch migration complex subunit RuvA from Streptococcus pyogenes serotype M18 (strain MGAS8232).